The primary structure comprises 757 residues: Protein transport protein SEC23-2 (757 aa).

The Zn(2+) site is built by C56, C61, C80, and C83.

The protein belongs to the SEC23/SEC24 family. SEC23 subfamily. In terms of assembly, the COPII coat is composed of at least 5 proteins: the SEC23/24 complex, the SEC13/31 complex, and the protein SAR1.

It is found in the cytoplasm. The protein resides in the cytoplasmic vesicle. It localises to the COPII-coated vesicle membrane. The protein localises to the endoplasmic reticulum membrane. Its subcellular location is the golgi apparatus membrane. In terms of biological role, component of the coat protein complex II (COPII) which promotes the formation of transport vesicles from the endoplasmic reticulum (ER). The coat has two main functions, the physical deformation of the endoplasmic reticulum membrane into vesicles and the selection of cargo molecules. In Candida glabrata (strain ATCC 2001 / BCRC 20586 / JCM 3761 / NBRC 0622 / NRRL Y-65 / CBS 138) (Yeast), this protein is Protein transport protein SEC23-2 (SEC232).